Reading from the N-terminus, the 231-residue chain is Putative carboxymethylenebutenolidase (231 aa).

Residues Asp169 and His200 contribute to the active site.

This sequence belongs to the dienelactone hydrolase family.

It carries out the reaction 2-(5-oxo-2,5-dihydrofuran-2-ylidene)acetate + H2O = 4-oxohex-2-enedioate + H(+). The polypeptide is Putative carboxymethylenebutenolidase (Azospirillum brasilense).